The primary structure comprises 408 residues: Heparan-sulfate 6-O-sulfotransferase 1 (408 aa).

Over 8–14 the chain is Cytoplasmic; sequence MVERTSK. A helical; Signal-anchor for type II membrane protein transmembrane segment spans residues 15 to 35; it reads FLLIVAASVCFMLILYQYVGP. Topologically, residues 36–408 are lumenal; that stretch reads GLSLGAPSGR…DYMSHIIEKW (373 aa). 90-98 contacts 3'-phosphoadenylyl sulfate; the sequence is HIQKTGGTT. Substrate contacts are provided by residues 120–121, Arg-137, Trp-142, and His-147; that span reads KK. The active-site Proton acceptor is the His-147. Positions 182 and 190 each coordinate 3'-phosphoadenylyl sulfate. Positions 194 and 201 each coordinate substrate. Residue Asn-261 is glycosylated (N-linked (GlcNAc...) asparagine). Position 314 to 316 (314 to 316) interacts with 3'-phosphoadenylyl sulfate; the sequence is MQY. N-linked (GlcNAc...) asparagine glycosylation occurs at Asn-317. 320 to 321 contacts 3'-phosphoadenylyl sulfate; sequence RA. Asn-328 carries N-linked (GlcNAc...) asparagine glycosylation. Positions 348 to 382 form a coiled coil; the sequence is AKDLFQQRYQYKRQLERMEQRIKNREERLLHRSNE. The tract at residues 376–396 is disordered; it reads LLHRSNEALPKEETEEQGRLP.

It belongs to the sulfotransferase 6 family. N-glycosylated.

It localises to the membrane. The catalysed reaction is alpha-D-glucosaminyl-[heparan sulfate](n) + 3'-phosphoadenylyl sulfate = 6-sulfo-alpha-D-glucosaminyl-[heparan sulfate](n) + adenosine 3',5'-bisphosphate + H(+). Its function is as follows. 6-O-sulfation enzyme which catalyzes the transfer of sulfate from 3'-phosphoadenosine 5'-phosphosulfate (PAPS) to position 6 of the N-sulfoglucosamine residue (GlcNS) of heparan sulfate. May also play a role in limb development. In Gallus gallus (Chicken), this protein is Heparan-sulfate 6-O-sulfotransferase 1.